Reading from the N-terminus, the 974-residue chain is Translation initiation factor IF-2 (974 aa).

3 disordered regions span residues 67 to 86, 101 to 133, and 146 to 385; these read TRKH…ARTI, DVAE…RREA, and RQER…TFQA. A compositionally biased stretch (low complexity) spans 105-114; sequence GAEQGQAQVA. Composition is skewed to basic and acidic residues over residues 121–133 and 146–181; these read ELKR…RREA and RQER…KRAA. The segment covering 182-197 has biased composition (low complexity); it reads AEAAAAQQAAAQQAAE. Residues 210–261 show a composition bias toward basic and acidic residues; that stretch reads EEARAAAERAAQREAAKKAEDAAREAADKARAEQEEIRKRREAAEAEARAIR. Over residues 313–329 the composition is skewed to low complexity; that stretch reads PAGATPATTQAPAAGAG. Gly residues predominate over residues 358 to 371; sequence SSGGVDRGWRGGPK. The region spanning 474–643 is the tr-type G domain; the sequence is PRPPVVTVMG…LLQAEVLELK (170 aa). The G1 stretch occupies residues 483 to 490; it reads GHVDHGKT. Position 483–490 (483–490) interacts with GTP; it reads GHVDHGKT. The segment at 508 to 512 is G2; the sequence is GITQH. The segment at 529-532 is G3; it reads DTPG. Residues 529-533 and 583-586 contribute to the GTP site; these read DTPGH and NKID. The tract at residues 583–586 is G4; it reads NKID. Residues 619–621 form a G5 region; sequence SAK.

This sequence belongs to the TRAFAC class translation factor GTPase superfamily. Classic translation factor GTPase family. IF-2 subfamily.

It is found in the cytoplasm. Its function is as follows. One of the essential components for the initiation of protein synthesis. Protects formylmethionyl-tRNA from spontaneous hydrolysis and promotes its binding to the 30S ribosomal subunits. Also involved in the hydrolysis of GTP during the formation of the 70S ribosomal complex. The sequence is that of Translation initiation factor IF-2 from Burkholderia vietnamiensis (strain G4 / LMG 22486) (Burkholderia cepacia (strain R1808)).